A 108-amino-acid polypeptide reads, in one-letter code: MIMTTTPSIEGKKIERYCGIVVGEAVMGANVFRDIFAAIRDVVGGRSGAYEDELTNARQIGFRELEAEARSMGANAVVGIDIDYEVVGKGGSMLMVSISGTAVSCSDL.

This sequence belongs to the UPF0145 family.

The chain is UPF0145 protein Patl_2194 from Pseudoalteromonas atlantica (strain T6c / ATCC BAA-1087).